The primary structure comprises 404 residues: XK-related protein 8 (404 aa).

The next 8 membrane-spanning stretches (helical) occupy residues 14–34 (FVFS…DVWV), 44–64 (FFWF…VQMF), 167–187 (AVQF…VVDY), 206–226 (SLIY…ALAL), 227–247 (FASV…LVFV), 263–283 (GEWL…FNVA), 292–312 (AIYH…WWCC), and 319–339 (EPYA…GLLF).

This sequence belongs to the XK family.

It localises to the cell membrane. It catalyses the reaction a 1,2-diacyl-sn-glycero-3-phospho-L-serine(in) = a 1,2-diacyl-sn-glycero-3-phospho-L-serine(out). Functionally, phospholipid scramblase that promotes phosphatidylserine exposure on apoptotic cell surface, possibly by mediating phospholipid scrambling. Phosphatidylserine is a specific marker only present at the surface of apoptotic cells and acts as a specific signal for engulfment. This Tetraodon nigroviridis (Spotted green pufferfish) protein is XK-related protein 8.